A 431-amino-acid polypeptide reads, in one-letter code: FAD-dependent monooxygenase nodY1 (431 aa).

An N-terminal signal peptide occupies residues 1 to 21; sequence MASTGVSVIVVGLGLAGLTTA. Residues Glu-35 and Arg-110 each coordinate FAD. Residue Arg-188 is part of the active site. Asp-313 provides a ligand contact to FAD.

Belongs to the paxM FAD-dependent monooxygenase family. FAD is required as a cofactor.

Its pathway is secondary metabolite biosynthesis. Its function is as follows. FAD-dependent monooxygenase; part of the gene cluster that mediates the biosynthesis of the indole diterpenes nodulisporic acids (NA). Nodulisporic acid A (NAA) and its chemically modified derivatives are of particular significance because of their highly potent insecticidal activity against blood-feeding arthropods and lack of observable adverse effects on mammals, in particular the tremogenicity associated with the paspaline-derived IDTs is not observed. The geranylgeranyl diphosphate (GGPP) synthase ggs1, localized outside of the cluster, is proposed to catalyze the first step in nodulisporic acid biosynthesis via conversion of farnesyl pyrophosphate and isopentyl pyrophosphate into geranylgeranyl pyrophosphate (GGPP). Condensation of indole-3-glycerol phosphate with GGPP by the prenyl transferase nodC then forms 3-geranylgeranylindole (3-GGI). Epoxidation by the FAD-dependent monooxygenase nodM leads to a single-epoxidized-GGI that is substrate of the terpene cyclase nodB for cyclization to yield emindole SB. The terminal methyl carbon, C28, of emindole SB is then oxidized by the cytochrome P450 monooxygenase nodW to produce nodulisporic acid F (NAF), the pentacyclic core of NAA. NAF is converted to nodulisporic acid E (NAE) via prenylation. This step is probably performed by one of the indole diterpene prenyltransferases nodD1 or nodD2. Several oxidation steps performed by the FAD-linked oxidoreductase nodO and one of the cytochrome P450 monooxygenase nodR, nodX or nodZ further convert NAE to nodulisporic acid D (NAD). NAD is substrate of cytochrome P450 monooxygenase nodJ to produce the precursor of nodulisporic acid C (NAC), converted to NAC by one of the indole diterpene prenyltransferases nodD1 or nodD2. The FAD-dependent monooxygenase nodY2 then oxidizes NAC to nodulisporic acid B (NAB). Finally NAB is converted to NAA by one of the cytochrome P450 monooxygenases nodR, nodX or nodZ. In Hypoxylon pulicicidum, this protein is FAD-dependent monooxygenase nodY1.